A 310-amino-acid chain; its full sequence is 4-hydroxyproline 2-epimerase (310 aa).

The Proton acceptor role is filled by cysteine 88. Substrate contacts are provided by residues 89 to 90 (GH), histidine 208, and aspartate 232. Cysteine 236 (proton donor) is an active-site residue. 237-238 (GT) is a binding site for substrate.

It belongs to the proline racemase family.

The catalysed reaction is trans-4-hydroxy-L-proline = cis-4-hydroxy-D-proline. In terms of biological role, catalyzes the epimerization of trans-4-hydroxy-L-proline (t4LHyp) to cis-4-hydroxy-D-proline (c4DHyp). Is likely involved in a degradation pathway that converts t4LHyp to alpha-ketoglutarate. Can also catalyze the dehydration of trans-3-hydroxy-L-proline (t3LHyp) to Delta(1)-pyrroline-2-carboxylate (Pyr2C), albeit with 42-fold lower efficiency. Displays no proline racemase activity. The protein is 4-hydroxyproline 2-epimerase of Burkholderia thailandensis (strain ATCC 700388 / DSM 13276 / CCUG 48851 / CIP 106301 / E264).